We begin with the raw amino-acid sequence, 299 residues long: CDP-abequose synthase (299 aa).

Residue Thr-117 participates in substrate binding. Tyr-134 serves as the catalytic Proton acceptor.

The protein belongs to the NAD(P)-dependent epimerase/dehydratase family.

The enzyme catalyses CDP-alpha-D-abequose + NADP(+) = CDP-4-dehydro-3,6-dideoxy-alpha-D-glucose + NADPH + H(+). The protein operates within bacterial outer membrane biogenesis; LPS O-antigen biosynthesis. The polypeptide is CDP-abequose synthase (rfbJ) (Salmonella typhimurium (strain LT2 / SGSC1412 / ATCC 700720)).